Consider the following 467-residue polypeptide: GTPase Der (467 aa).

EngA-type G domains are found at residues 3-167 and 179-352; these read PTLV…PYEE and PVIA…AAAR. GTP contacts are provided by residues 9–16, 56–60, 119–122, 185–192, 232–236, and 297–300; these read GRPNVGKS, DTGGF, NKTE, DTAGL, and NKWD. The KH-like domain occupies 353 to 437; that stretch reads AHIPTPKLTR…PLRVEFRTGH (85 aa). Residues 434–467 are disordered; the sequence is RTGHNPYAGKKTPLTEEEARRAHSRRRRNRKKYG. The segment covering 455–467 has biased composition (basic residues); that stretch reads AHSRRRRNRKKYG.

Belongs to the TRAFAC class TrmE-Era-EngA-EngB-Septin-like GTPase superfamily. EngA (Der) GTPase family. Associates with the 50S ribosomal subunit.

Functionally, GTPase that plays an essential role in the late steps of ribosome biogenesis. The chain is GTPase Der from Nitrosomonas europaea (strain ATCC 19718 / CIP 103999 / KCTC 2705 / NBRC 14298).